Reading from the N-terminus, the 608-residue chain is Probable Ufm1-specific protease 2 (608 aa).

Catalysis depends on residues C441, D565, and H567.

This sequence belongs to the peptidase C78 family.

Its function is as follows. Thiol protease which recognizes and hydrolyzes the peptide bond at the C-terminal Gly of UFM1, a ubiquitin-like modifier protein bound to a number of target proteins. Does not hydrolyze SUMO1 or ISG15 ubiquitin-like proteins. The polypeptide is Probable Ufm1-specific protease 2 (Drosophila pseudoobscura pseudoobscura (Fruit fly)).